The following is a 192-amino-acid chain: Ion-translocating oxidoreductase complex subunit B (192 aa).

Residues 1-26 (MNTIWIAVAAISLLGLAFGAILGYAS) form a hydrophobic region. Positions 32–91 (EDDPVVEKIDEILPQSQCGQCGYPGCRPYAEAISCNGEKINRCAPGGEAVMLKISELLNV) constitute a 4Fe-4S domain. [4Fe-4S] cluster is bound by residues C49, C52, C57, C74, C117, C120, C123, C127, C147, C150, C153, and C157. 4Fe-4S ferredoxin-type domains follow at residues 108–137 (VVAVIDENNCIGCTKCIQACPVDAIVGATR) and 138–167 (AMHTVMSDLCTGCNLCVDPCPTQCISLQPV).

This sequence belongs to the 4Fe4S bacterial-type ferredoxin family. RnfB subfamily. The complex is composed of six subunits: RsxA, RsxB, RsxC, RsxD, RsxE and RsxG. The cofactor is [4Fe-4S] cluster.

The protein resides in the cell inner membrane. Its function is as follows. Part of a membrane-bound complex that couples electron transfer with translocation of ions across the membrane. Required to maintain the reduced state of SoxR. The protein is Ion-translocating oxidoreductase complex subunit B of Escherichia fergusonii (strain ATCC 35469 / DSM 13698 / CCUG 18766 / IAM 14443 / JCM 21226 / LMG 7866 / NBRC 102419 / NCTC 12128 / CDC 0568-73).